The primary structure comprises 405 residues: Argininosuccinate synthase (405 aa).

ATP contacts are provided by residues 10-18 and Ala-37; that span reads AYSGGLDTS. 2 residues coordinate L-citrulline: Tyr-88 and Ser-93. Residue Gly-118 coordinates ATP. Thr-120, Asn-124, and Asp-125 together coordinate L-aspartate. Residue Asn-124 participates in L-citrulline binding. Residues Arg-128, Ser-179, Ser-188, Glu-264, and Tyr-276 each coordinate L-citrulline.

This sequence belongs to the argininosuccinate synthase family. Type 1 subfamily. As to quaternary structure, homotetramer.

The protein localises to the cytoplasm. It carries out the reaction L-citrulline + L-aspartate + ATP = 2-(N(omega)-L-arginino)succinate + AMP + diphosphate + H(+). It participates in amino-acid biosynthesis; L-arginine biosynthesis; L-arginine from L-ornithine and carbamoyl phosphate: step 2/3. This chain is Argininosuccinate synthase, found in Pseudomonas aeruginosa (strain LESB58).